Reading from the N-terminus, the 152-residue chain is SsrA-binding protein (152 aa).

It belongs to the SmpB family.

The protein resides in the cytoplasm. Functionally, required for rescue of stalled ribosomes mediated by trans-translation. Binds to transfer-messenger RNA (tmRNA), required for stable association of tmRNA with ribosomes. tmRNA and SmpB together mimic tRNA shape, replacing the anticodon stem-loop with SmpB. tmRNA is encoded by the ssrA gene; the 2 termini fold to resemble tRNA(Ala) and it encodes a 'tag peptide', a short internal open reading frame. During trans-translation Ala-aminoacylated tmRNA acts like a tRNA, entering the A-site of stalled ribosomes, displacing the stalled mRNA. The ribosome then switches to translate the ORF on the tmRNA; the nascent peptide is terminated with the 'tag peptide' encoded by the tmRNA and targeted for degradation. The ribosome is freed to recommence translation, which seems to be the essential function of trans-translation. The chain is SsrA-binding protein from Sulfurihydrogenibium sp. (strain YO3AOP1).